The sequence spans 495 residues: Aspartyl/glutamyl-tRNA(Asn/Gln) amidotransferase subunit B (495 aa).

This sequence belongs to the GatB/GatE family. GatB subfamily. In terms of assembly, heterotrimer of A, B and C subunits.

The enzyme catalyses L-glutamyl-tRNA(Gln) + L-glutamine + ATP + H2O = L-glutaminyl-tRNA(Gln) + L-glutamate + ADP + phosphate + H(+). It catalyses the reaction L-aspartyl-tRNA(Asn) + L-glutamine + ATP + H2O = L-asparaginyl-tRNA(Asn) + L-glutamate + ADP + phosphate + 2 H(+). In terms of biological role, allows the formation of correctly charged Asn-tRNA(Asn) or Gln-tRNA(Gln) through the transamidation of misacylated Asp-tRNA(Asn) or Glu-tRNA(Gln) in organisms which lack either or both of asparaginyl-tRNA or glutaminyl-tRNA synthetases. The reaction takes place in the presence of glutamine and ATP through an activated phospho-Asp-tRNA(Asn) or phospho-Glu-tRNA(Gln). In Gloeothece citriformis (strain PCC 7424) (Cyanothece sp. (strain PCC 7424)), this protein is Aspartyl/glutamyl-tRNA(Asn/Gln) amidotransferase subunit B.